The sequence spans 158 residues: NAD(P)H-quinone oxidoreductase subunit J, chloroplastic (158 aa).

This sequence belongs to the complex I 30 kDa subunit family. As to quaternary structure, NDH is composed of at least 16 different subunits, 5 of which are encoded in the nucleus.

The protein resides in the plastid. Its subcellular location is the chloroplast thylakoid membrane. The catalysed reaction is a plastoquinone + NADH + (n+1) H(+)(in) = a plastoquinol + NAD(+) + n H(+)(out). The enzyme catalyses a plastoquinone + NADPH + (n+1) H(+)(in) = a plastoquinol + NADP(+) + n H(+)(out). In terms of biological role, NDH shuttles electrons from NAD(P)H:plastoquinone, via FMN and iron-sulfur (Fe-S) centers, to quinones in the photosynthetic chain and possibly in a chloroplast respiratory chain. The immediate electron acceptor for the enzyme in this species is believed to be plastoquinone. Couples the redox reaction to proton translocation, and thus conserves the redox energy in a proton gradient. The chain is NAD(P)H-quinone oxidoreductase subunit J, chloroplastic from Morus indica (Mulberry).